The primary structure comprises 404 residues: S-adenosylmethionine synthase (404 aa).

Residues Met1 to Val13 show a composition bias toward polar residues. The tract at residues Met1–Val21 is disordered. His17 provides a ligand contact to ATP. Asp19 is a Mg(2+) binding site. Glu45 provides a ligand contact to K(+). 2 residues coordinate L-methionine: Glu58 and Gln101. The flexible loop stretch occupies residues Gln101–Arg111. Residues Asp172 to Lys174, Arg245 to Phe246, Asp254, Arg260 to Lys261, Ala277, and Lys281 contribute to the ATP site. Residue Asp254 coordinates L-methionine. Lys285 contributes to the L-methionine binding site.

Belongs to the AdoMet synthase family. In terms of assembly, homotetramer; dimer of dimers. The cofactor is Mg(2+). K(+) serves as cofactor.

It is found in the cytoplasm. The enzyme catalyses L-methionine + ATP + H2O = S-adenosyl-L-methionine + phosphate + diphosphate. It participates in amino-acid biosynthesis; S-adenosyl-L-methionine biosynthesis; S-adenosyl-L-methionine from L-methionine: step 1/1. In terms of biological role, catalyzes the formation of S-adenosylmethionine (AdoMet) from methionine and ATP. The overall synthetic reaction is composed of two sequential steps, AdoMet formation and the subsequent tripolyphosphate hydrolysis which occurs prior to release of AdoMet from the enzyme. The protein is S-adenosylmethionine synthase of Chlorobium phaeobacteroides (strain DSM 266 / SMG 266 / 2430).